An 84-amino-acid chain; its full sequence is U8-theraphotoxin-Hhn1e (84 aa).

The first 21 residues, 1–21 (MKVVLLVCLVWMMAMMELVSC), serve as a signal peptide directing secretion. 5 disulfides stabilise this stretch: Cys23/Cys35, Cys29/Cys44, Cys34/Cys67, Cys54/Cys75, and Cys69/Cys81.

The protein belongs to the AVIT (prokineticin) family. As to expression, expressed by the venom gland.

Its subcellular location is the secreted. The polypeptide is U8-theraphotoxin-Hhn1e (Cyriopagopus hainanus (Chinese bird spider)).